The sequence spans 294 residues: tRNA dimethylallyltransferase (294 aa).

10–17 (GPTAVGKT) provides a ligand contact to ATP. 12–17 (TAVGKT) is a substrate binding site. An interaction with substrate tRNA region spans residues 35–38 (DSQQ).

It belongs to the IPP transferase family. In terms of assembly, monomer. Mg(2+) is required as a cofactor.

The enzyme catalyses adenosine(37) in tRNA + dimethylallyl diphosphate = N(6)-dimethylallyladenosine(37) in tRNA + diphosphate. In terms of biological role, catalyzes the transfer of a dimethylallyl group onto the adenine at position 37 in tRNAs that read codons beginning with uridine, leading to the formation of N6-(dimethylallyl)adenosine (i(6)A). The polypeptide is tRNA dimethylallyltransferase (Streptococcus pneumoniae (strain Hungary19A-6)).